The primary structure comprises 159 residues: Secreted RxLR effector protein 50 (159 aa).

The signal sequence occupies residues 1-19 (MRSSTVLYVLGAAILAVNG). The RxLR-dEER motif lies at 38–54 (RWLRSNAMEHETDDEER).

Belongs to the RxLR effector family.

Its subcellular location is the secreted. It is found in the host nucleus. The protein localises to the host cytoplasm. Its function is as follows. Secreted effector that completely suppresses the host cell death induced by cell death-inducing proteins. The chain is Secreted RxLR effector protein 50 from Plasmopara viticola (Downy mildew of grapevine).